The chain runs to 280 residues: Chlorophyll a-b binding protein CP29 (280 aa).

The tract at residues 1–42 is disordered; it reads MVFKFPTPPGTQKKAGTTATKPAPKATTKKVATSTGTRSGGV. Val-2 carries the N-acetylvaline modification. Thr-7 carries the phosphothreonine; in State 1 and State 2 modification. Residues 10–37 are compositionally biased toward low complexity; sequence GTQKKAGTTATKPAPKATTKKVATSTGT. Position 17 is a phosphothreonine; in State 2 (Thr-17). At Thr-33 the chain carries Phosphothreonine; in State 1 and State 2. Tyr-47 is a chlorophyll b binding site. Chlorophyll a is bound by residues Phe-73 and Ser-79. Position 103 is a phosphoserine; in State 2 (Ser-103). 2 residues coordinate chlorophyll a: Glu-137 and His-140. The next 2 membrane-spanning stretches (helical) occupy residues 143 to 163 and 176 to 196; these read WAML…VSWV and AGLS…ILVG. Ser-183, Glu-199, and Arg-202 together coordinate chlorophyll b. Chlorophyll a-binding residues include Glu-238, His-241, Arg-243, and Gln-255. The chain crosses the membrane as a helical span at residues 244–264; sequence LAMVSFFGYGVQALSTGEGAL.

Belongs to the light-harvesting chlorophyll a/b-binding (LHC) protein family. As to quaternary structure, the LHC complex consists of chlorophyll a-b binding proteins. Binds at least 14 chlorophylls (8 Chl-a and 6 Chl-b) and carotenoids such as lutein and neoxanthin. is required as a cofactor. Reversible phosphorylation plays a role in the State transition process and determines the affinity of LHCII for PSI and PSII.

The protein localises to the plastid. It is found in the chloroplast thylakoid membrane. Its function is as follows. The light-harvesting complex (LHC) functions as a light receptor, it captures and delivers excitation energy to photosystems with which it is closely associated. CP29 facilitates the State 1 to State 2 transition, where State I is induced by excess photosystem I (PSI) light and State 2 is induced by excess photosystem II (PSII) light. This Chlamydomonas reinhardtii (Chlamydomonas smithii) protein is Chlorophyll a-b binding protein CP29.